A 674-amino-acid polypeptide reads, in one-letter code: Polyunsaturated fatty acid 5-lipoxygenase (674 aa).

Positions 2–118 (PSYTVTVATG…EIVLRDGRAK (117 aa)) constitute a PLAT domain. Residues glycine 17, threonine 18, aspartate 19, asparagine 44, aspartate 45, glutamate 47, aspartate 79, and aspartate 80 each coordinate Ca(2+). A Lipoxygenase domain is found at 119 to 674 (LARDDQIHIL…PDRIPNSVAI (556 aa)). Residue serine 272 is modified to Phosphoserine. Fe cation is bound by residues histidine 368 and histidine 373. Serine 524 carries the post-translational modification Phosphoserine. Fe cation contacts are provided by histidine 551, asparagine 555, and isoleucine 674.

Belongs to the lipoxygenase family. In terms of assembly, homodimer. Interacts with ALOX5AP and LTC4S. Interacts with COTL1, the interaction is required for stability and efficient catalytic activity. Interacts with PIK3R1; this interaction bridges ALOX5 with CD40 after CD40 ligation in B cells and leads to the production of reactive oxygen species (ROS). Interacts (via PLAT domain) with DICER1 (via Dicer dsRNA-binding fold domain); this interaction enhances arachidonate 5-lipoxygenase activity and modifies the miRNA precursor processing activity of DICER1. Requires Fe cation as cofactor. Serine phosphorylation by MAPKAPK2 is stimulated by arachidonic acid. Phosphorylation on Ser-524 by PKA has an inhibitory effect. Phosphorylation on Ser-272 prevents export from the nucleus. Phosphorylation at Ser-524 is stimulated by 8-bromo-3',5'-cyclic AMP or prostaglandin E2. Expressed in skin Langerhans cells and their emigrated counterparts in draining lymph nodes. Highly expressed in circulating leukocytes.

The protein resides in the cytoplasm. The protein localises to the nucleus matrix. Its subcellular location is the nucleus membrane. It localises to the perinuclear region. It is found in the cytosol. The protein resides in the nucleus envelope. The protein localises to the nucleus intermembrane space. It carries out the reaction (5Z,8Z,11Z,14Z)-eicosatetraenoate + O2 = (5S)-hydroperoxy-(6E,8Z,11Z,14Z)-eicosatetraenoate. It catalyses the reaction (5Z,8Z,11Z,14Z)-eicosatetraenoate + O2 = leukotriene A4 + H2O. The enzyme catalyses (5Z,8Z,11Z,14Z)-eicosatetraenoate + O2 = (8S)-hydroperoxy-(5Z,9E,11Z,14Z)-eicosatetraenoate. The catalysed reaction is (5Z,8Z,11Z,14Z)-eicosatetraenoate + O2 = (12S)-hydroperoxy-(5Z,8Z,10E,14Z)-eicosatetraenoate. It carries out the reaction 18-HEPE + O2 = (5S)-hydroperoxy-18-hydroxy-(7E,9E,11Z,14Z,16E)-eicosapentaenoate. It catalyses the reaction (18R)-hydroxy-(5Z,8Z,11Z,14Z,16E)-eicosapentaenoate + O2 = (5S)-hydroperoxy-(18R)-hydroxy-(6E,8Z,11Z,14Z,16E)-eicosapentaenoate. The enzyme catalyses (18S)-hydroxy-(5Z,8Z,11Z,14Z,16E)-eicosapentaenoate + O2 = (5S)-hydroperoxy-(18S)-hydroxy-(6E,8Z,11Z,14Z,16E)-eicosapentaenoate. The catalysed reaction is (5S)-hydroperoxy-(18S)-hydroxy-(6E,8Z,11Z,14Z,16E)-eicosapentaenoate = (5S,6S)-epoxy-(18S)-hydroxy-(7E,9E,11Z,14Z,16E)-eicosapentaenoate + H2O. It carries out the reaction (5S)-hydroperoxy-(18R)-hydroxy-(6E,8Z,11Z,14Z,16E)-eicosapentaenoate = (5S,6S)-epoxy-(18R)-hydroxy-(7E,9E,11Z,14Z,16E)-eicosapentaenoate + H2O. It catalyses the reaction (5S)-hydroperoxy-18-hydroxy-(7E,9E,11Z,14Z,16E)-eicosapentaenoate = (5S,6S)-epoxy-18-hydroxy-(7E,9E,11Z,14Z,16E)-eicosapentaenoate + H2O. The enzyme catalyses (15S)-hydroxy-(5Z,8Z,11Z,13E)-eicosatetraenoate + O2 = (5S)-hydroperoxy-(15S)-hydroxy-(6E,8Z,11Z,13E)-eicosatetraenoate. The catalysed reaction is (5S)-hydroperoxy-(6E,8Z,11Z,14Z)-eicosatetraenoate = leukotriene A4 + H2O. It carries out the reaction (5Z,8Z)-eicosadienoate + O2 = (5S)-hydroperoxy-(6E,8Z)-eicosadienoate. It catalyses the reaction (12S)-hydroxy-(5Z,8Z,10E,14Z)-eicosatetraenoate + O2 = (5S)-hydroperoxy-(12S)-hydroxy-(6E,8Z,10E,14Z)-eicosatetraenoate. The enzyme catalyses (5Z,8Z,11Z,14Z,17Z)-eicosapentaenoate + O2 = 5-hydroperoxy-(6E,8Z,11Z,14Z,17Z)-eicosapentaenoate. The catalysed reaction is (4Z,7Z,10Z,13Z,16Z,19Z)-docosahexaenoate + O2 = (14S)-hydroperoxy-(4Z,7Z,10Z,12E,16Z,19Z)-docosahexaenoate. It carries out the reaction (4Z,7Z,10Z,13Z,16Z,19Z)-docosahexaenoate + O2 = (7S)-hydroperoxy-(4Z,8E,10Z,13Z,16Z,19Z)-docosahexaenoate. It catalyses the reaction (4Z,7Z,10Z,13Z,16Z,19Z)-docosahexaenoate + O2 = (17S)-hydroperoxy-(4Z,7Z,10Z,13Z,15E,19Z)-docosahexaenoate. It participates in lipid metabolism; leukotriene A4 biosynthesis. Functionally, catalyzes the oxygenation of arachidonate to 5-hydroperoxyeicosatetraenoate (5-HPETE) followed by the dehydration to 5,6- epoxyeicosatetraenoate (Leukotriene A4/LTA4), the first two steps in the biosynthesis of leukotrienes, which are potent mediators of inflammation. Also catalyzes the oxygenation of arachidonic acid into 8-hydroperoxyicosatetraenoic acid (8-HPETE) and 12-hydroperoxyicosatetraenoic acid (12-HPETE). Displays lipoxin synthase activity being able to convert (15S)-HETE into a conjugate tetraene. Although arachidonate is the preferred substrate, this enzyme can also metabolize oxidized fatty acids derived from arachidonate such as (15S)-HETE, eicosapentaenoate (EPA) such as (18R)- and (18S)-HEPE or docosahexaenoate (DHA) which lead to the formation of specialized pro-resolving mediators (SPM) lipoxin and resolvins E and D respectively, therefore it participates in anti-inflammatory responses. Oxidation of DHA directly inhibits endothelial cell proliferation and sprouting angiogenesis via peroxisome proliferator-activated receptor gamma (PPARgamma). It does not catalyze the oxygenation of linoleic acid and does not convert (5S)-HETE to lipoxin isomers. In addition to inflammatory processes, participates in dendritic cell migration, wound healing through an antioxidant mechanism based on heme oxygenase-1 (HO-1) regulation expression, monocyte adhesion to the endothelium via ITGAM expression on monocytes. Moreover, it helps establish an adaptive humoral immunity by regulating primary resting B cells and follicular helper T cells and participates in the CD40-induced production of reactive oxygen species (ROS) after CD40 ligation in B cells through interaction with PIK3R1 that bridges ALOX5 with CD40. May also play a role in glucose homeostasis, regulation of insulin secretion and palmitic acid-induced insulin resistance via AMPK. Can regulate bone mineralization and fat cell differentiation increases in induced pluripotent stem cells. The polypeptide is Polyunsaturated fatty acid 5-lipoxygenase (Mus musculus (Mouse)).